We begin with the raw amino-acid sequence, 128 residues long: Ribonuclease P protein component 4 (128 aa).

Cys-67, Cys-70, Cys-96, and Cys-99 together coordinate Zn(2+).

It belongs to the eukaryotic/archaeal RNase P protein component 4 family. In terms of assembly, consists of a catalytic RNA component and at least 4-5 protein subunits. It depends on Zn(2+) as a cofactor.

The protein localises to the cytoplasm. It carries out the reaction Endonucleolytic cleavage of RNA, removing 5'-extranucleotides from tRNA precursor.. In terms of biological role, part of ribonuclease P, a protein complex that generates mature tRNA molecules by cleaving their 5'-ends. The protein is Ribonuclease P protein component 4 of Methanopyrus kandleri (strain AV19 / DSM 6324 / JCM 9639 / NBRC 100938).